Reading from the N-terminus, the 311-residue chain is MALPILLDCDPGHDDAIAIVLALASPELDVKAITSSAGNQTPEKTLRNVLRMLTLLNRTDIPVAGGAVKPLMRELIIADNVHGESGLDGPALPEPTFAPQNCTAVELMAKTLRESAEPVTIVSTGPQTNVALLLNSHPELHSKIARIVIMGGAMGLGNWTPAAEFNIYVDPEAAEIVFQSGIPVVMAGLDVTHKAQIHVEDTERFRAIGNPVSTIVAELLDFFLEYHKDEKWGFVGAPLHDPCTIAWLLKPELFTTVERWVGVETQGKYTQGMTVVDYYYLTGNKPNATVMVDVDRQGFVDLLADRLKFYA.

Residue His-240 is part of the active site.

It belongs to the IUNH family. RihA subfamily.

Its function is as follows. Hydrolyzes with equal efficiency cytidine or uridine to ribose and cytosine or uracil, respectively. In Escherichia coli O157:H7, this protein is Pyrimidine-specific ribonucleoside hydrolase RihA.